A 291-amino-acid chain; its full sequence is Tyramine--L-glutamate ligase (291 aa).

Residues 104–274 enclose the ATP-grasp domain; that stretch reads KYPVKNLGCS…LAELLIKNAN (171 aa). An ATP-binding site is contributed by 131-176; the sequence is KDYVKTPKTFKPKKYVIKKIDGCGGKFNLFDENFLIQEFVEGESLS. Mg(2+) contacts are provided by aspartate 236, glutamate 247, and asparagine 249. Mn(2+) is bound by residues aspartate 236, glutamate 247, and asparagine 249.

Mg(2+) is required as a cofactor. It depends on Mn(2+) as a cofactor.

The catalysed reaction is tyramine + L-glutamate + ATP = gamma-L-glutamyltyramine + ADP + phosphate + H(+). The protein operates within cofactor biosynthesis; methanofuran biosynthesis. Catalyzes the formation of an amide bond between tyramine and the gamma carboxy group of L-glutamate. The enzyme also accepts phenylethylamine in vitro. The protein is Tyramine--L-glutamate ligase of Methanocaldococcus fervens (strain DSM 4213 / JCM 15782 / AG86) (Methanococcus fervens).